A 293-amino-acid chain; its full sequence is Ribonuclease H2 subunit B (293 aa).

The segment at 251–278 (KRPQNSDITSSLLKKPNRKQATKKSKYF) is disordered. The span at 265-276 (KPNRKQATKKSK) shows a compositional bias: basic residues.

This sequence belongs to the RNase H2 subunit B family. Component of the RNase H2 complex.

It localises to the nucleus. The protein localises to the cytoplasm. Its function is as follows. Non catalytic subunit of RNase H2, an endonuclease that specifically degrades the RNA of RNA:DNA hybrids. Participates in DNA replication, possibly by mediating the removal of lagging-strand Okazaki fragment RNA primers during DNA replication. Mediates the excision of single ribonucleotides from DNA:RNA duplexes. In Schizosaccharomyces pombe (strain 972 / ATCC 24843) (Fission yeast), this protein is Ribonuclease H2 subunit B (rnh202).